We begin with the raw amino-acid sequence, 461 residues long: Proline--tRNA ligase (461 aa).

The protein belongs to the class-II aminoacyl-tRNA synthetase family. ProS type 3 subfamily. In terms of assembly, homodimer.

The protein resides in the cytoplasm. It catalyses the reaction tRNA(Pro) + L-proline + ATP = L-prolyl-tRNA(Pro) + AMP + diphosphate. In terms of biological role, catalyzes the attachment of proline to tRNA(Pro) in a two-step reaction: proline is first activated by ATP to form Pro-AMP and then transferred to the acceptor end of tRNA(Pro). In Methanococcus vannielii (strain ATCC 35089 / DSM 1224 / JCM 13029 / OCM 148 / SB), this protein is Proline--tRNA ligase.